A 598-amino-acid polypeptide reads, in one-letter code: EF-hand and coiled-coil domain-containing protein 1 (598 aa).

A disordered region spans residues 1–22 (MEPVSTGAEAGMEGAGGDPYRR). The region spanning 54–89 (GLDQYLQEVFHHLDCRGAGRLPRADFRALCAVLGLR) is the EF-hand domain. 3 disordered regions span residues 96–127 (AGQA…DTDE), 175–198 (RLRR…PDCE), and 326–411 (YRSE…KKTP). Positions 175–185 (RLRRPRRRRRP) are enriched in basic residues. Residues 196 to 303 (DCERVARLEE…RSLHRVRELE (108 aa)) are a coiled coil. The segment covering 343-359 (PGDKSNEPEDAGTRDPD) has biased composition (basic and acidic residues). Residues 394 to 404 (SDEEEVEEERW) show a composition bias toward acidic residues. Positions 479–533 (TSEEEAELQQKVEENEHLRLELQMVETERVRLSLLEEKLVDVLQLLQRLRDLNIS) form a coiled coil.

The protein is EF-hand and coiled-coil domain-containing protein 1 (EFCC1) of Homo sapiens (Human).